The chain runs to 587 residues: Probable phosphoribomutase (587 aa).

Substrate-binding positions include threonine 49, arginine 53, and 149-150 (SH). The active-site Phosphoserine intermediate is serine 149. Mg(2+) is bound by residues serine 149, aspartate 306, aspartate 308, and aspartate 310. Serine 149 is subject to Phosphoserine. Residues 310 to 311 (DR), threonine 380, 404 to 406 (EEA), and lysine 418 contribute to the substrate site.

It belongs to the phosphohexose mutase family. Mg(2+) is required as a cofactor.

It localises to the cytoplasm. The protein localises to the nucleus. The enzyme catalyses alpha-D-ribose 1-phosphate = D-ribose 5-phosphate. In terms of biological role, converts ribose 1-phosphate to ribose 5-phosphate. Involved in ribose salvage via the pentose phosphate pathway. The protein is Probable phosphoribomutase of Schizosaccharomyces pombe (strain 972 / ATCC 24843) (Fission yeast).